The primary structure comprises 1188 residues: DNA-directed RNA polymerase subunit beta (1188 aa).

The protein belongs to the RNA polymerase beta chain family. As to quaternary structure, the RNAP catalytic core consists of 2 alpha, 1 beta, 1 beta' and 1 omega subunit. When a sigma factor is associated with the core the holoenzyme is formed, which can initiate transcription.

The catalysed reaction is RNA(n) + a ribonucleoside 5'-triphosphate = RNA(n+1) + diphosphate. Its function is as follows. DNA-dependent RNA polymerase catalyzes the transcription of DNA into RNA using the four ribonucleoside triphosphates as substrates. The protein is DNA-directed RNA polymerase subunit beta of Streptococcus sanguinis (strain SK36).